Consider the following 308-residue polypeptide: HTH-type transcriptional activator AllS (308 aa).

The region spanning F2–T59 is the HTH lysR-type domain. The segment at residues F19–K38 is a DNA-binding region (H-T-H motif).

It belongs to the LysR transcriptional regulatory family.

In terms of biological role, positive regulator essential for the expression of allD operon. Binds to the allD promoter. In Salmonella paratyphi A (strain ATCC 9150 / SARB42), this protein is HTH-type transcriptional activator AllS (allS).